The following is a 155-amino-acid chain: MVRKVLMICLGNICRSPIAEVVMVDTLEKANVKDVEVDSAAIGGWHVGNRADPRAISTLQKHGLKCTHIVRQIRKQDFSEFDYIFGMDEDNMSELRRLAPKGSKAELLMLGDFGLEKKNRIIEDPYYERGAEGFETAYQQCVVACAAFMKERLQK.

The active-site Nucleophile is the cysteine 9. Arginine 15 is a catalytic residue. Residue aspartate 124 is the Proton donor of the active site.

The protein belongs to the low molecular weight phosphotyrosine protein phosphatase family. Cone cells and primary pigment cells in developing pupal retina.

It is found in the cytoplasm. The enzyme catalyses O-phospho-L-tyrosyl-[protein] + H2O = L-tyrosyl-[protein] + phosphate. It catalyses the reaction a phosphate monoester + H2O = an alcohol + phosphate. In terms of biological role, acts on tyrosine phosphorylated proteins, low-MW aryl phosphates and natural and synthetic acyl phosphates. The polypeptide is Low molecular weight phosphotyrosine protein phosphatase 1 (primo-1) (Drosophila melanogaster (Fruit fly)).